Reading from the N-terminus, the 332-residue chain is Cell growth regulator with RING finger domain protein 1 (332 aa).

An RING-type zinc finger spans residues 274–309 (CVVCQNGTVNWVLLPCRHTCLCDGCVKYFQQCPMCR).

Ubiquitously expressed with high expression in testis and the cerebellum.

The protein resides in the nucleus. It is found in the endoplasmic reticulum. In terms of biological role, able to inhibit growth in several cell lines. This Homo sapiens (Human) protein is Cell growth regulator with RING finger domain protein 1 (CGRRF1).